The chain runs to 291 residues: 33 kDa chaperonin (291 aa).

2 cysteine pairs are disulfide-bonded: C235-C237 and C268-C271.

The protein belongs to the HSP33 family. Post-translationally, under oxidizing conditions two disulfide bonds are formed involving the reactive cysteines. Under reducing conditions zinc is bound to the reactive cysteines and the protein is inactive.

It is found in the cytoplasm. Redox regulated molecular chaperone. Protects both thermally unfolding and oxidatively damaged proteins from irreversible aggregation. Plays an important role in the bacterial defense system toward oxidative stress. This is 33 kDa chaperonin from Streptococcus agalactiae serotype III (strain NEM316).